The sequence spans 271 residues: MANYSAADVKRLRELTGAGMMDCKKALEATEGDFDKAVENLRIKGAKDVGKRAERATAEGLVAADNGVLVELNSETDFVAKNDEFIELANKVVAAVKAAGARDLEGALAASLDGKTVGEVVQELSAKIGEKLELRRVATFDGKVATYLHRRSADLPPAVGVLVEYTGDSEEAARGAAMQVAALKPKYLNRDEVPADIVADERRIAEETARAEGKPEKALEKIVEGRLNGFYKDNVLLDQPSVQDSKKTVKALLDEAGVTVTGFARFEVGQA.

Positions 76–79 (TDFV) are involved in Mg(2+) ion dislocation from EF-Tu.

Belongs to the EF-Ts family.

The protein localises to the cytoplasm. Its function is as follows. Associates with the EF-Tu.GDP complex and induces the exchange of GDP to GTP. It remains bound to the aminoacyl-tRNA.EF-Tu.GTP complex up to the GTP hydrolysis stage on the ribosome. This is Elongation factor Ts from Saccharopolyspora erythraea (strain ATCC 11635 / DSM 40517 / JCM 4748 / NBRC 13426 / NCIMB 8594 / NRRL 2338).